A 154-amino-acid polypeptide reads, in one-letter code: 6,7-dimethyl-8-ribityllumazine synthase (154 aa).

5-amino-6-(D-ribitylamino)uracil contacts are provided by residues Phe21, 55–57, and 79–81; these read AFE and CVI. Residue 84 to 85 coordinates (2S)-2-hydroxy-3-oxobutyl phosphate; the sequence is AT. The Proton donor role is filled by His87. Phe112 provides a ligand contact to 5-amino-6-(D-ribitylamino)uracil. A (2S)-2-hydroxy-3-oxobutyl phosphate-binding site is contributed by Arg126.

This sequence belongs to the DMRL synthase family. As to quaternary structure, forms an icosahedral capsid composed of 60 subunits, arranged as a dodecamer of pentamers.

The enzyme catalyses (2S)-2-hydroxy-3-oxobutyl phosphate + 5-amino-6-(D-ribitylamino)uracil = 6,7-dimethyl-8-(1-D-ribityl)lumazine + phosphate + 2 H2O + H(+). It functions in the pathway cofactor biosynthesis; riboflavin biosynthesis; riboflavin from 2-hydroxy-3-oxobutyl phosphate and 5-amino-6-(D-ribitylamino)uracil: step 1/2. Functionally, catalyzes the formation of 6,7-dimethyl-8-ribityllumazine by condensation of 5-amino-6-(D-ribitylamino)uracil with 3,4-dihydroxy-2-butanone 4-phosphate. This is the penultimate step in the biosynthesis of riboflavin. The sequence is that of 6,7-dimethyl-8-ribityllumazine synthase from Staphylococcus aureus (strain MRSA252).